A 137-amino-acid chain; its full sequence is Fluoride-specific ion channel FluC 2 (137 aa).

Transmembrane regions (helical) follow at residues Met3–Gly23, Trp44–Ala64, Pro76–Leu96, and Leu111–Leu131. Na(+)-binding residues include Gly86 and Thr89.

This sequence belongs to the fluoride channel Fluc/FEX (TC 1.A.43) family.

The protein resides in the cell inner membrane. It carries out the reaction fluoride(in) = fluoride(out). With respect to regulation, na(+) is not transported, but it plays an essential structural role and its presence is essential for fluoride channel function. Functionally, fluoride-specific ion channel. Important for reducing fluoride concentration in the cell, thus reducing its toxicity. The chain is Fluoride-specific ion channel FluC 2 from Bradyrhizobium diazoefficiens (strain JCM 10833 / BCRC 13528 / IAM 13628 / NBRC 14792 / USDA 110).